The primary structure comprises 122 residues: Large ribosomal subunit protein uL14 (122 aa).

It belongs to the universal ribosomal protein uL14 family. In terms of assembly, part of the 50S ribosomal subunit. Forms a cluster with proteins L3 and L19. In the 70S ribosome, L14 and L19 interact and together make contacts with the 16S rRNA in bridges B5 and B8.

Functionally, binds to 23S rRNA. Forms part of two intersubunit bridges in the 70S ribosome. This chain is Large ribosomal subunit protein uL14, found in Carsonella ruddii (strain PV).